The chain runs to 508 residues: Photosystem II CP47 reaction center protein (508 aa).

6 consecutive transmembrane segments (helical) span residues 21-36, 101-115, 140-156, 203-218, 237-252, and 457-472; these read AVHI…WAGS, IVFS…IWHW, GIHL…FGAF, IAAG…FHLS, VLSS…AFVV, and TFAL…HGAR.

It belongs to the PsbB/PsbC family. PsbB subfamily. As to quaternary structure, PSII is composed of 1 copy each of membrane proteins PsbA, PsbB, PsbC, PsbD, PsbE, PsbF, PsbH, PsbI, PsbJ, PsbK, PsbL, PsbM, PsbT, PsbX, PsbY, PsbZ, Psb30/Ycf12, at least 3 peripheral proteins of the oxygen-evolving complex and a large number of cofactors. It forms dimeric complexes. It depends on Binds multiple chlorophylls. PSII binds additional chlorophylls, carotenoids and specific lipids. as a cofactor.

It is found in the plastid. Its subcellular location is the chloroplast thylakoid membrane. In terms of biological role, one of the components of the core complex of photosystem II (PSII). It binds chlorophyll and helps catalyze the primary light-induced photochemical processes of PSII. PSII is a light-driven water:plastoquinone oxidoreductase, using light energy to abstract electrons from H(2)O, generating O(2) and a proton gradient subsequently used for ATP formation. In Secale cereale (Rye), this protein is Photosystem II CP47 reaction center protein.